Here is a 241-residue protein sequence, read N- to C-terminus: MQHKSPVVTWDLFGLDIKFNLASILMVIITSLIVLVIAIACTRNLQKRPTGKQNFIEWVFDFVRGIIESNLAWKKGGQFHFLTVTLILFIFVGNMLGLPFAIVIDHTLWWKSPTADATVTLTLATMVILLTHYYGIKMRGTKNYFKNYGQPFLALTPVNIFEEFTNTLTLGLRLYGNIYAGEILIGLLSSLIIGHAAWGWIIGVPGLIAWQAFSIFIGTIQAYIFIMLSMVYMSHKIADDH.

Transmembrane regions (helical) follow at residues leucine 21 to cysteine 41, valine 84 to isoleucine 104, aspartate 116 to isoleucine 136, isoleucine 183 to glycine 203, and leucine 207 to methionine 227.

Belongs to the ATPase A chain family. In terms of assembly, F-type ATPases have 2 components, CF(1) - the catalytic core - and CF(0) - the membrane proton channel. CF(1) has five subunits: alpha(3), beta(3), gamma(1), delta(1), epsilon(1). CF(0) has three main subunits: a(1), b(2) and c(9-12). The alpha and beta chains form an alternating ring which encloses part of the gamma chain. CF(1) is attached to CF(0) by a central stalk formed by the gamma and epsilon chains, while a peripheral stalk is formed by the delta and b chains.

The protein resides in the cell membrane. Key component of the proton channel; it plays a direct role in the translocation of protons across the membrane. This is ATP synthase subunit a from Staphylococcus carnosus (strain TM300).